We begin with the raw amino-acid sequence, 94 residues long: Large ribosomal subunit protein uL24c (94 aa).

The protein belongs to the universal ribosomal protein uL24 family. Part of the 50S ribosomal subunit.

It is found in the plastid. The protein resides in the chloroplast. Its function is as follows. One of two assembly initiator proteins, it binds directly to the 5'-end of the 23S rRNA, where it nucleates assembly of the 50S subunit. The chain is Large ribosomal subunit protein uL24c (rpl24) from Cyanidium caldarium (Red alga).